Consider the following 384-residue polypeptide: 5-amino-6-(D-ribitylamino)uracil--L-tyrosine 4-hydroxyphenyl transferase 2 (384 aa).

In terms of domain architecture, Radical SAM core spans 53 to 286 (VSYVVNRNIY…IAISRVILHT (234 aa)). [4Fe-4S] cluster contacts are provided by cysteine 67, cysteine 71, and cysteine 74.

It belongs to the radical SAM superfamily. CofH family. As to quaternary structure, consists of two subunits, CofG and CofH. [4Fe-4S] cluster serves as cofactor.

It catalyses the reaction 5-amino-6-(D-ribitylamino)uracil + L-tyrosine + S-adenosyl-L-methionine = 5-amino-5-(4-hydroxybenzyl)-6-(D-ribitylimino)-5,6-dihydrouracil + 2-iminoacetate + 5'-deoxyadenosine + L-methionine + H(+). It participates in cofactor biosynthesis; coenzyme F0 biosynthesis. In terms of biological role, catalyzes the radical-mediated synthesis of 5-amino-5-(4-hydroxybenzyl)-6-(D-ribitylimino)-5,6-dihydrouracil from 5-amino-6-(D-ribitylamino)uracil and L-tyrosine. The sequence is that of 5-amino-6-(D-ribitylamino)uracil--L-tyrosine 4-hydroxyphenyl transferase 2 from Methanosarcina mazei (strain ATCC BAA-159 / DSM 3647 / Goe1 / Go1 / JCM 11833 / OCM 88) (Methanosarcina frisia).